We begin with the raw amino-acid sequence, 179 residues long: Prion-like protein doppel (179 aa).

The first 25 residues, 1-25, serve as a signal peptide directing secretion; that stretch reads MKNRLGTWWVAILCMLLASHLSTVK. Residues 27–50 are flexible tail; the sequence is RGIKHRFKWNRKVLPSSGGQITEA. The segment at 51 to 155 is globular; sequence RVAENRPGAF…KHCDFWLERG (105 aa). 2 cysteine pairs are disulfide-bonded: C95–C148 and C109–C143. Residues N99 and N111 are each glycosylated (N-linked (GlcNAc...) asparagine). Residues 125 to 142 form a cu(2+) binding region; sequence KQDSKLHQRVLWRLIKEI. Residue G155 is the site of GPI-anchor amidated glycine attachment. Residues 156 to 179 constitute a propeptide, removed in mature form; that stretch reads AALRVAVDQPAMVCLLGFVWFIVK.

The protein belongs to the prion family. Post-translationally, N-glycosylated. N-glycosylated at two distinct sites. In terms of processing, O-glycosylated. Detected in testis. Detected within seminiferous tubules, on round and elongated spermatids (at protein level). Not detected in brain (at protein level). Detected in testis, and at low levels in heart. Expression in brain is very low and barely detectable.

It is found in the cell membrane. Its function is as follows. Required for normal acrosome reaction and for normal male fertility. Can bind Cu(2+). The polypeptide is Prion-like protein doppel (Prnd) (Mus musculus (Mouse)).